Consider the following 364-residue polypeptide: Fructose-bisphosphate aldolase B (364 aa).

Residue A2 is modified to N-acetylalanine. At K13 the chain carries N6-succinyllysine. S36 carries the post-translational modification Phosphoserine. T39 is modified (phosphothreonine). R43 provides a ligand contact to beta-D-fructose 1,6-bisphosphate. T119 is subject to Phosphothreonine. Position 121 is an N6-succinyllysine (K121). A Phosphoserine modification is found at S132. E188 functions as the Proton acceptor in the catalytic mechanism. K230 functions as the Schiff-base intermediate with dihydroxyacetone-P in the catalytic mechanism. Phosphoserine occurs at positions 272, 276, 299, and 301. Position 272-274 (272-274 (SGG)) interacts with beta-D-fructose 1,6-bisphosphate. Residue R304 coordinates beta-D-fructose 1,6-bisphosphate. S309 carries the phosphoserine modification. K317 is subject to N6-succinyllysine.

Belongs to the class I fructose-bisphosphate aldolase family. As to quaternary structure, homotetramer. Interacts with BBS1, BBS2, BBS4 and BBS7. Forms a ternary complex with G6PD and TP53; this interaction is direct.

It is found in the cytoplasm. The protein resides in the cytosol. Its subcellular location is the cytoskeleton. It localises to the microtubule organizing center. The protein localises to the centrosome. It is found in the centriolar satellite. It carries out the reaction beta-D-fructose 1,6-bisphosphate = D-glyceraldehyde 3-phosphate + dihydroxyacetone phosphate. The enzyme catalyses beta-D-fructose 1-phosphate = D-glyceraldehyde + dihydroxyacetone phosphate. It functions in the pathway carbohydrate degradation; glycolysis; D-glyceraldehyde 3-phosphate and glycerone phosphate from D-glucose: step 4/4. It participates in carbohydrate biosynthesis; gluconeogenesis. The protein operates within carbohydrate metabolism; fructose metabolism. In terms of biological role, catalyzes the aldol cleavage of fructose 1,6-biphosphate to form two triosephosphates dihydroxyacetone phosphate and D-glyceraldehyde 3-phosphate in glycolysis as well as the reverse stereospecific aldol addition reaction in gluconeogenesis. In fructolysis, metabolizes fructose 1-phosphate derived from the phosphorylation of dietary fructose by fructokinase into dihydroxyacetone phosphate and D-glyceraldehyde. Acts as an adapter independently of its enzymatic activity, exerts a tumor suppressor role by stabilizing the ternary complex with G6PD and TP53 to inhibit G6PD activity and keep oxidative pentose phosphate metabolism in check. This chain is Fructose-bisphosphate aldolase B (ALDOB), found in Ovis aries (Sheep).